The sequence spans 372 residues: Envelope phospholipase OPG057 (372 aa).

Residues 153–156 (YPPL) carry the YPPL motif. 2 S-palmitoyl cysteine; by host lipidation sites follow: Cys-185 and Cys-186. The PLD phosphodiesterase domain occupies 307–334 (FTIQNNTKLLIVDDEYVHITSANFDGTH).

Belongs to the orthopoxvirus OPG057 family. As to quaternary structure, interacts with protein OPG190. In terms of processing, palmitoylated. Attachment of the palmitate moiety is essential for correct intracellular targeting and protein function.

It localises to the virion membrane. Its subcellular location is the host Golgi apparatus. It is found in the host trans-Golgi network. The protein localises to the host endoplasmic reticulum membrane. The enzyme catalyses a 1,2-diacyl-sn-glycero-3-phosphocholine + H2O = a 1,2-diacyl-sn-glycero-3-phosphate + choline + H(+). Its function is as follows. Major envelope protein that plays a role in the biogenesis of the viral double membrane and in egress of virus from the host cell. Produces the wrapped form of virus that is required for cell-to-cell spread. Acts as a lipase with broad specificity including phospholipase C, phospholipase A, and triacylglycerol lipase activities. This chain is Envelope phospholipase OPG057 (OPG057), found in Homo sapiens (Human).